Here is a 74-residue protein sequence, read N- to C-terminus: DNA-directed RNA polymerase subunit omega (74 aa).

Belongs to the RNA polymerase subunit omega family. The RNAP catalytic core consists of 2 alpha, 1 beta, 1 beta' and 1 omega subunit. When a sigma factor is associated with the core the holoenzyme is formed, which can initiate transcription.

The enzyme catalyses RNA(n) + a ribonucleoside 5'-triphosphate = RNA(n+1) + diphosphate. In terms of biological role, promotes RNA polymerase assembly. Latches the N- and C-terminal regions of the beta' subunit thereby facilitating its interaction with the beta and alpha subunits. The protein is DNA-directed RNA polymerase subunit omega of Marinomonas sp. (strain MWYL1).